The primary structure comprises 365 residues: Autoinducer 2-binding periplasmic protein LuxP (365 aa).

The N-terminal stretch at 1-23 is a signal peptide; sequence MKKALLFSLISMVGFSPASQATQ.

This sequence belongs to the bacterial solute-binding protein 2 family.

It localises to the periplasm. Binds to the signaling molecule autoinducer 2 (AI-2), a furanosyl borate diester, (3a-methyl-5,6-dihydrofuro-[2,3d][1,3,2]dioxaborole-2,2,6,6a-tetraol). This complex then interacts with the LuxQ sensor protein. In Vibrio harveyi (Beneckea harveyi), this protein is Autoinducer 2-binding periplasmic protein LuxP (luxP).